The following is a 299-amino-acid chain: Lathosterol oxidase (299 aa).

3 helical membrane-spanning segments follow: residues Ile32 to Leu52, Phe79 to Ile99, and Phe117 to Ile137. The Fatty acid hydroxylase domain occupies Ile124–Gly252. The short motif at His138–His143 is the Histidine box-1 element. The short motif at His151–His155 is the Histidine box-2 element. Residues Ile186 to Ile206 traverse the membrane as a helical segment. A Histidine box-3 motif is present at residues His228–His233. The residue at position 253 (Ser253) is a Phosphoserine. Residues Glu274–Glu299 are disordered. Over residues Lys286–Glu299 the composition is skewed to basic and acidic residues.

It belongs to the sterol desaturase family. Requires Fe cation as cofactor.

The protein resides in the endoplasmic reticulum membrane. The catalysed reaction is a Delta(7)-sterol + 2 Fe(II)-[cytochrome b5] + O2 + 2 H(+) = a Delta(5),Delta(7)-sterol + 2 Fe(III)-[cytochrome b5] + 2 H2O. It catalyses the reaction lathosterol + 2 Fe(II)-[cytochrome b5] + O2 + 2 H(+) = 7-dehydrocholesterol + 2 Fe(III)-[cytochrome b5] + 2 H2O. It carries out the reaction 5alpha-cholesta-7,24-dien-3beta-ol + 2 Fe(II)-[cytochrome b5] + O2 + 2 H(+) = 7-dehydrodesmosterol + 2 Fe(III)-[cytochrome b5] + 2 H2O. It participates in steroid biosynthesis; cholesterol biosynthesis. Its function is as follows. Catalyzes the penultimate step of the biosynthesis of cholesterol, the dehydrogenation of lathosterol into 7-dehydrocholesterol (7-DHC). Cholesterol is the major sterol component in mammalian membranes and a precursor for bile acid and steroid hormone synthesis. In addition to its essential role in cholesterol biosynthesis, it also indirectly regulates ferroptosis through the production of 7-DHC. By diverting the spread of damage caused by peroxyl radicals from the phospholipid components to its sterol nucleus, 7-DHC prevents this form of cell death. This chain is Lathosterol oxidase, found in Homo sapiens (Human).